A 1052-amino-acid chain; its full sequence is Germline survival defective-1 (1052 aa).

The signal sequence occupies residues 1–25 (MRCLISYLFHSFLIFLKFIRSDVTA). Disordered regions lie at residues 41-320 (LMKS…DPKN), 478-543 (VNGI…QSVP), 667-689 (PSSQ…EEFE), 933-965 (KQTL…NSYA), and 1033-1052 (SNNT…NSNF). Low complexity predominate over residues 67 to 145 (ATATAAATTQ…SSTSSTSQQT (79 aa)). Polar residues predominate over residues 163 to 172 (TSNTANSQSG). Over residues 178–190 (TNKDRPKEKEKNT) the composition is skewed to basic and acidic residues. Residues 244 to 279 (NAKSSGFLSNSSLSSAGQISASSAPPVSTTPTAIPI) show a composition bias toward low complexity. The segment covering 305 to 320 (KRDEEPMPYKSTDPKN) has biased composition (basic and acidic residues). The gld-4 binding stretch occupies residues 424–732 (QHPPGLPPLL…QIEKNDNLFS (309 aa)). Positions 480–514 (GISNNIPSDRQQLDSKPNTARGSSGNINQSNTTSP) are enriched in polar residues. A compositionally biased stretch (acidic residues) spans 674–689 (DENDTDSDHESEEEFE). A gld-3 binding region spans residues 892-1052 (PIELPVNMQP…SGGGNQNSNF (161 aa)). The segment covering 950–963 (EGSQQNGGTSSSNS) has biased composition (low complexity). Residues 1038 to 1052 (GVNGNSGGGNQNSNF) are compositionally biased toward gly residues.

As to quaternary structure, isoform C interacts (via C-terminus) with gld-3 isoform A (via C-terminus) in an RNA-independent manner. Isoform C interacts with gld-4. Expressed in the germline (at protein level). In the early embryo is expressed in all cells, then becomes gradually restricted to the germ cell lineage and enriches in P granules (at protein level). In adult hermaphrodites, is expressed in the mitotic region, accumulates during early stages of meiotic prophase I and is slightly less abundant in maturing oocytes (at protein level).

The protein localises to the cytoplasm. It localises to the cytoplasmic granule. Its function is as follows. Required maternally for germline survival by forming a maternal complex with gld-3. During hermaphrodite development forms a complex with gld-3 which promotes the sperm/oocyte switch freeing the translational repressor fbf to turn off sperm promoting factors. Required for proper oocyte differentiation and oogenic meiotic arrest. Stimulates the enzymatic activity of gld-4 and together they prevent gld-1 mRNA degradation. The sequence is that of Germline survival defective-1 from Caenorhabditis elegans.